A 902-amino-acid polypeptide reads, in one-letter code: Inter-alpha-trypsin inhibitor heavy chain H1 (902 aa).

The signal sequence occupies residues 1–28 (MDGTMGLQGLLCLCLASHLALQAMPTQG). Residues 29-158 (SPTDSTKGNK…KATFQLTYEE (130 aa)) enclose the VIT domain. An S-linked (Hex...) cysteine glycan is attached at C52. N-linked (GlcNAc...) asparagine glycosylation occurs at N69. The residue at position 121 (S121) is a Phosphoserine. An N-linked (GlcNAc...) asparagine glycan is attached at N277. The region spanning 282–442 (NKNVVFVIDI…WNFLEVRALE (161 aa)) is the VWFA domain. Residues T394 and T399 each carry the phosphothreonine modification. Over residues 637-651 (SASQPSPTHPSSSIQ) the composition is skewed to polar residues. Residues 637–656 (SASQPSPTHPSSSIQKLPDR) form a disordered region. A glycan (O-linked (GalNAc...) serine) is linked at S639. T644 carries an O-linked (GalNAc...) threonine glycan. The residue at position 663 (D663) is an Aspartate 1-(chondroitin 4-sulfate)-ester. Residues 664-902 (PHFIIRVPQK…HTDYIVPDIF (239 aa)) constitute a propeptide that is removed on maturation. Residue N741 is glycosylated (N-linked (GlcNAc...) asparagine).

Belongs to the ITIH family. I-alpha-I plasma protease inhibitors are assembled from one or two heavy chains (HC) and one light chain, bikunin. Inter-alpha-inhibitor (I-alpha-I) is composed of ITIH1/HC1, ITIH2/HC2 and bikunin. Interacts with TNFAIP6 (via Link and CUB domains). Post-translationally, heavy chains are linked to bikunin via chondroitin 4-sulfate esterified to the alpha-carboxyl of the C-terminal aspartate after propeptide cleavage. The S-linked glycan is composed of two 6-carbon sugars, possibly Glc or Gal.

The protein localises to the secreted. May act as a carrier of hyaluronan in serum or as a binding protein between hyaluronan and other matrix protein, including those on cell surfaces in tissues to regulate the localization, synthesis and degradation of hyaluronan which are essential to cells undergoing biological processes. This Sus scrofa (Pig) protein is Inter-alpha-trypsin inhibitor heavy chain H1 (ITIH1).